A 696-amino-acid polypeptide reads, in one-letter code: Elongation factor G (696 aa).

The tr-type G domain occupies glutamate 8 to leucine 290. Residues alanine 17–threonine 24, aspartate 88–histidine 92, and asparagine 142–aspartate 145 contribute to the GTP site.

This sequence belongs to the TRAFAC class translation factor GTPase superfamily. Classic translation factor GTPase family. EF-G/EF-2 subfamily.

The protein resides in the cytoplasm. Catalyzes the GTP-dependent ribosomal translocation step during translation elongation. During this step, the ribosome changes from the pre-translocational (PRE) to the post-translocational (POST) state as the newly formed A-site-bound peptidyl-tRNA and P-site-bound deacylated tRNA move to the P and E sites, respectively. Catalyzes the coordinated movement of the two tRNA molecules, the mRNA and conformational changes in the ribosome. The sequence is that of Elongation factor G from Nitrosomonas eutropha (strain DSM 101675 / C91 / Nm57).